We begin with the raw amino-acid sequence, 141 residues long: Large ribosomal subunit protein uL11 (141 aa).

It belongs to the universal ribosomal protein uL11 family. In terms of assembly, part of the ribosomal stalk of the 50S ribosomal subunit. Interacts with L10 and the large rRNA to form the base of the stalk. L10 forms an elongated spine to which L12 dimers bind in a sequential fashion forming a multimeric L10(L12)X complex. In terms of processing, one or more lysine residues are methylated.

Functionally, forms part of the ribosomal stalk which helps the ribosome interact with GTP-bound translation factors. This chain is Large ribosomal subunit protein uL11, found in Agathobacter rectalis (strain ATCC 33656 / DSM 3377 / JCM 17463 / KCTC 5835 / VPI 0990) (Eubacterium rectale).